Consider the following 267-residue polypeptide: 4-hydroxy-tetrahydrodipicolinate reductase (267 aa).

Residues 8-13 (GAAGRM) and glutamate 34 contribute to the NAD(+) site. Arginine 35 contacts NADP(+). NAD(+) is bound by residues 98–100 (GST) and 122–125 (APNM). Residue histidine 155 is the Proton donor/acceptor of the active site. Histidine 156 is a (S)-2,3,4,5-tetrahydrodipicolinate binding site. The active-site Proton donor is the lysine 159. Residue 165–166 (GT) participates in (S)-2,3,4,5-tetrahydrodipicolinate binding.

This sequence belongs to the DapB family.

The protein localises to the cytoplasm. It catalyses the reaction (S)-2,3,4,5-tetrahydrodipicolinate + NAD(+) + H2O = (2S,4S)-4-hydroxy-2,3,4,5-tetrahydrodipicolinate + NADH + H(+). The catalysed reaction is (S)-2,3,4,5-tetrahydrodipicolinate + NADP(+) + H2O = (2S,4S)-4-hydroxy-2,3,4,5-tetrahydrodipicolinate + NADPH + H(+). The protein operates within amino-acid biosynthesis; L-lysine biosynthesis via DAP pathway; (S)-tetrahydrodipicolinate from L-aspartate: step 4/4. Functionally, catalyzes the conversion of 4-hydroxy-tetrahydrodipicolinate (HTPA) to tetrahydrodipicolinate. The sequence is that of 4-hydroxy-tetrahydrodipicolinate reductase from Geotalea daltonii (strain DSM 22248 / JCM 15807 / FRC-32) (Geobacter daltonii).